The chain runs to 86 residues: Conidiation-specific protein 10 (86 aa).

Polar residues predominate over residues 1 to 11; it reads MAGTGNDNPGN. The interval 1–86 is disordered; it reads MAGTGNDNPG…SGGTGADDDE (86 aa). Positions 49 to 58 are enriched in low complexity; it reads SKGGKASSGS. Residues 62–71 show a composition bias toward basic and acidic residues; the sequence is GSEKAREAGR. The segment covering 75 to 86 has biased composition (gly residues); that stretch reads KASGGTGADDDE.

This sequence belongs to the con-10 family.

This chain is Conidiation-specific protein 10 (con-10), found in Neurospora crassa (strain ATCC 24698 / 74-OR23-1A / CBS 708.71 / DSM 1257 / FGSC 987).